The sequence spans 141 residues: MAKKVSKIVKLQVVAGKANPAPPVGPALGQAGVNIMGFCKEFNERTKDKAGLIIPVEITVFEDRSFTFITKTPPAAVLLKKAAKIEKASGEPNKNKVAKLPRAEAMKIAESKMEDLNAADIEAATRMIEGTARSMGIEIVD.

It belongs to the universal ribosomal protein uL11 family. As to quaternary structure, part of the ribosomal stalk of the 50S ribosomal subunit. Interacts with L10 and the large rRNA to form the base of the stalk. L10 forms an elongated spine to which L12 dimers bind in a sequential fashion forming a multimeric L10(L12)X complex. Post-translationally, one or more lysine residues are methylated.

Its function is as follows. Forms part of the ribosomal stalk which helps the ribosome interact with GTP-bound translation factors. This chain is Large ribosomal subunit protein uL11, found in Selenomonas ruminantium.